A 186-amino-acid chain; its full sequence is MTLLVGLGNPTLRYAHTRHNAGFDILDSLVSELDLSFTFSSKHNAYLCVYKDFILLKPQTYMNLSGESVLSAKNFYKPKELLIVHDDLDLPLGVVRFKKGGGNGGHNGLKSIDLLCSNSYYRLRVGISKGIDVIEHVLSKFHKNEEPLKNAVFEHAKNALKFFIESHDFNAMQNRFTLKKPLIIES.

Position 14 (tyrosine 14) interacts with tRNA. Histidine 19 (proton acceptor) is an active-site residue. TRNA contacts are provided by tyrosine 61, asparagine 63, and asparagine 107.

The protein belongs to the PTH family. In terms of assembly, monomer.

Its subcellular location is the cytoplasm. It carries out the reaction an N-acyl-L-alpha-aminoacyl-tRNA + H2O = an N-acyl-L-amino acid + a tRNA + H(+). In terms of biological role, hydrolyzes ribosome-free peptidyl-tRNAs (with 1 or more amino acids incorporated), which drop off the ribosome during protein synthesis, or as a result of ribosome stalling. Catalyzes the release of premature peptidyl moieties from peptidyl-tRNA molecules trapped in stalled 50S ribosomal subunits, and thus maintains levels of free tRNAs and 50S ribosomes. This chain is Peptidyl-tRNA hydrolase, found in Helicobacter pylori (strain P12).